The primary structure comprises 315 residues: tRNA dimethylallyltransferase (315 aa).

ATP is bound at residue 14–21 (GPTASGKT). Position 16 to 21 (16 to 21 (TASGKT)) interacts with substrate. 3 interaction with substrate tRNA regions span residues 39–42 (DSAL), 163–167 (QRIQR), and 248–253 (RCVGYR).

Belongs to the IPP transferase family. Monomer. Requires Mg(2+) as cofactor.

The enzyme catalyses adenosine(37) in tRNA + dimethylallyl diphosphate = N(6)-dimethylallyladenosine(37) in tRNA + diphosphate. Its function is as follows. Catalyzes the transfer of a dimethylallyl group onto the adenine at position 37 in tRNAs that read codons beginning with uridine, leading to the formation of N6-(dimethylallyl)adenosine (i(6)A). This Paraburkholderia xenovorans (strain LB400) protein is tRNA dimethylallyltransferase.